The following is a 200-amino-acid chain: Imidazole glycerol phosphate synthase subunit HisH (200 aa).

The 198-residue stretch at 3–200 folds into the Glutamine amidotransferase type-1 domain; it reads EVALIDAGGA…LRNFLEMDAA (198 aa). C78 functions as the Nucleophile in the catalytic mechanism. Active-site residues include H179 and E181.

Heterodimer of HisH and HisF.

The protein localises to the cytoplasm. The enzyme catalyses 5-[(5-phospho-1-deoxy-D-ribulos-1-ylimino)methylamino]-1-(5-phospho-beta-D-ribosyl)imidazole-4-carboxamide + L-glutamine = D-erythro-1-(imidazol-4-yl)glycerol 3-phosphate + 5-amino-1-(5-phospho-beta-D-ribosyl)imidazole-4-carboxamide + L-glutamate + H(+). The catalysed reaction is L-glutamine + H2O = L-glutamate + NH4(+). It participates in amino-acid biosynthesis; L-histidine biosynthesis; L-histidine from 5-phospho-alpha-D-ribose 1-diphosphate: step 5/9. In terms of biological role, IGPS catalyzes the conversion of PRFAR and glutamine to IGP, AICAR and glutamate. The HisH subunit catalyzes the hydrolysis of glutamine to glutamate and ammonia as part of the synthesis of IGP and AICAR. The resulting ammonia molecule is channeled to the active site of HisF. This Xylella fastidiosa (strain Temecula1 / ATCC 700964) protein is Imidazole glycerol phosphate synthase subunit HisH.